The sequence spans 102 residues: Probable non-specific lipid-transfer protein (102 aa).

A signal peptide spans M1 to A35. Intrachain disulfides connect C37–C71, C45–C59, C60–C95, and C69–C102.

It belongs to the plant LTP family. B11E subfamily. Aleurone.

Functionally, potential phospholipid transfer protein. The sequence is that of Probable non-specific lipid-transfer protein (LTP2) from Hordeum vulgare (Barley).